The primary structure comprises 270 residues: MAEAVGAVALIAAPARRRWLWSVLAAMLGLLTARISALEVHTPKEIFVVNGTQGKLTCTFDSPNTTGWLTTVSWSFQPDGTDSAVSFFHYSQGQVYIGDYPPFKDRVTWAGDLDKKDASINIENIQAVHNGTYICDVKNPPDIVVRPGHIRLHVVEIDNLLVFLVWVVVGTVTAVVLGLTLLISLVLVVLYRRKHSKRDYTGCSTSERLSPVKQAPRKCPSDTEGLVKSPPSAGSHQGPVIYAQLDHSGGHHSGKINKSESVVYADIRKD.

The signal sequence occupies residues Met1–Ile35. The Ig-like V-type domain maps to Ser36–Arg151. The Extracellular portion of the chain corresponds to Ser36–Val162. N-linked (GlcNAc...) asparagine glycosylation is found at Asn50 and Asn130. Cys58 and Cys135 form a disulfide bridge. Residues Phe163–Ile183 traverse the membrane as a helical segment. The Cytoplasmic segment spans residues Ser184–Asp270. Residues Thr201–Asn257 form a disordered region. 4 positions are modified to phosphoserine: Ser204, Ser206, Ser210, and Ser221. An ITIM motif 1 motif is present at residues Val240–Leu245. Phosphotyrosine is present on Tyr242. Ser261 is modified (phosphoserine). Positions Val262–Ile267 match the ITIM motif 2 motif. A Phosphotyrosine modification is found at Tyr264.

Belongs to the myelin P0 protein family. In terms of assembly, interacts with phosphorylated PTPN11/SHP-2. Post-translationally, phosphorylated on tyrosine residues upon stimulation with pervanadate and concanavalin-A (ConA). Phosphorylation at Tyr-242 and Tyr-264 is required for interaction with PTPN11/SHP-2. Dephosphorylated by PTPN11/SHP-2 (in vitro).

Its subcellular location is the membrane. Cell surface receptor, which is involved in signal transduction processes. Recruits PTPN11/SHP-2 to the cell membrane and is a putative substrate of PTPN11/SHP-2. Is a major receptor for concanavalin-A (ConA) and is involved in cellular signaling induced by ConA, which probably includes Src family tyrosine-protein kinases. Isoform 2 seems to have a dominant negative role; it blocks tyrosine phosphorylation of MPZL1 induced by ConA. Isoform 1, but not isoform 2, may be involved in regulation of integrin-mediated cell motility. The polypeptide is Myelin protein zero-like protein 1 (Mpzl1) (Mus musculus (Mouse)).